We begin with the raw amino-acid sequence, 385 residues long: Lipid-A-disaccharide synthase (385 aa).

Belongs to the LpxB family.

It catalyses the reaction a lipid X + a UDP-2-N,3-O-bis[(3R)-3-hydroxyacyl]-alpha-D-glucosamine = a lipid A disaccharide + UDP + H(+). It participates in bacterial outer membrane biogenesis; LPS lipid A biosynthesis. Condensation of UDP-2,3-diacylglucosamine and 2,3-diacylglucosamine-1-phosphate to form lipid A disaccharide, a precursor of lipid A, a phosphorylated glycolipid that anchors the lipopolysaccharide to the outer membrane of the cell. The sequence is that of Lipid-A-disaccharide synthase from Xylella fastidiosa (strain M12).